Here is a 71-residue protein sequence, read N- to C-terminus: Antitoxin VapB26 (71 aa).

Its function is as follows. Antitoxin component of a type II toxin-antitoxin (TA) system. Upon expression in M.smegmatis neutralizes the effect of cognate toxin VapC26. This is Antitoxin VapB26 (vapB26) from Mycobacterium tuberculosis (strain ATCC 25618 / H37Rv).